We begin with the raw amino-acid sequence, 363 residues long: 3-isopropylmalate dehydrogenase (363 aa).

78–91 (XXXXXXXXXXXXXX) is an NAD(+) binding site. Positions 99, 109, 138, and 227 each coordinate substrate. Mg(2+)-binding residues include Asp-227, Asp-251, and Asp-255. 285 to 297 (GSAPDIEGKNIAN) serves as a coordination point for NAD(+).

Belongs to the isocitrate and isopropylmalate dehydrogenases family. LeuB type 1 subfamily. As to quaternary structure, homodimer. Mg(2+) serves as cofactor. Requires Mn(2+) as cofactor.

The protein resides in the cytoplasm. The enzyme catalyses (2R,3S)-3-isopropylmalate + NAD(+) = 4-methyl-2-oxopentanoate + CO2 + NADH. It functions in the pathway amino-acid biosynthesis; L-leucine biosynthesis; L-leucine from 3-methyl-2-oxobutanoate: step 3/4. Functionally, catalyzes the oxidation of 3-carboxy-2-hydroxy-4-methylpentanoate (3-isopropylmalate) to 3-carboxy-4-methyl-2-oxopentanoate. The product decarboxylates to 4-methyl-2 oxopentanoate. This chain is 3-isopropylmalate dehydrogenase, found in Buchnera aphidicola subsp. Uroleucon solidaginis.